The following is a 130-amino-acid chain: Small ribosomal subunit protein uS9 (130 aa).

It belongs to the universal ribosomal protein uS9 family.

The protein is Small ribosomal subunit protein uS9 of Halalkalibacterium halodurans (strain ATCC BAA-125 / DSM 18197 / FERM 7344 / JCM 9153 / C-125) (Bacillus halodurans).